Here is a 197-residue protein sequence, read N- to C-terminus: dTTP/UTP pyrophosphatase (197 aa).

Aspartate 70 functions as the Proton acceptor in the catalytic mechanism.

It belongs to the Maf family. YhdE subfamily. The cofactor is a divalent metal cation.

The protein resides in the cytoplasm. The enzyme catalyses dTTP + H2O = dTMP + diphosphate + H(+). It carries out the reaction UTP + H2O = UMP + diphosphate + H(+). Functionally, nucleoside triphosphate pyrophosphatase that hydrolyzes dTTP and UTP. May have a dual role in cell division arrest and in preventing the incorporation of modified nucleotides into cellular nucleic acids. The polypeptide is dTTP/UTP pyrophosphatase (Methanosarcina mazei (strain ATCC BAA-159 / DSM 3647 / Goe1 / Go1 / JCM 11833 / OCM 88) (Methanosarcina frisia)).